The sequence spans 662 residues: Acetyl-coenzyme A synthetase (662 aa).

Residues 197 to 200 (RKGK) and Thr317 contribute to the CoA site. Residues 393–395 (GEP), 417–422 (DTWWQT), Asp510, and Arg525 each bind ATP. Position 533 (Ser533) interacts with CoA. Arg536 serves as a coordination point for ATP. Positions 549 and 552 each coordinate Mg(2+). At Lys623 the chain carries N6-acetyllysine.

Belongs to the ATP-dependent AMP-binding enzyme family. Mg(2+) is required as a cofactor. Acetylated. Deacetylation by the SIR2-homolog deacetylase activates the enzyme.

It carries out the reaction acetate + ATP + CoA = acetyl-CoA + AMP + diphosphate. Functionally, catalyzes the conversion of acetate into acetyl-CoA (AcCoA), an essential intermediate at the junction of anabolic and catabolic pathways. AcsA undergoes a two-step reaction. In the first half reaction, AcsA combines acetate with ATP to form acetyl-adenylate (AcAMP) intermediate. In the second half reaction, it can then transfer the acetyl group from AcAMP to the sulfhydryl group of CoA, forming the product AcCoA. The polypeptide is Acetyl-coenzyme A synthetase (Helicobacter pylori (strain G27)).